A 178-amino-acid chain; its full sequence is Large ribosomal subunit protein uL6 (178 aa).

This sequence belongs to the universal ribosomal protein uL6 family. As to quaternary structure, part of the 50S ribosomal subunit.

In terms of biological role, this protein binds to the 23S rRNA, and is important in its secondary structure. It is located near the subunit interface in the base of the L7/L12 stalk, and near the tRNA binding site of the peptidyltransferase center. In Desulfatibacillum aliphaticivorans, this protein is Large ribosomal subunit protein uL6.